Here is a 336-residue protein sequence, read N- to C-terminus: Terephthalate 1,2-dioxygenase, reductase component 2 (336 aa).

Residues 3 to 91 (HQIHIHDSDI…DIRIHPSSFR (89 aa)) enclose the 2Fe-2S ferredoxin-type domain. [2Fe-2S] cluster contacts are provided by Cys37, Cys42, Cys45, and Cys75. Residues 98-197 (RKRFTAKVYS…ELPFGSIALK (100 aa)) form the FAD-binding FR-type domain.

In terms of assembly, monomer. Part of a multicomponent enzyme system composed of a reductase (TphA1I or TphA1II) and a two-subunit oxygenase component (TphA2I or TphA2II and TphA3I or TphA3II). The cofactor is FAD. [2Fe-2S] cluster is required as a cofactor.

It catalyses the reaction terephthalate + NADH + O2 + H(+) = (3S,4R)-3,4-dihydroxycyclohexa-1,5-diene-1,4-dicarboxylate + NAD(+). Its function is as follows. Component of the terephthalate 1,2-dioxygenase multicomponent enzyme system which catalyzes the dioxygenation of terephthalate (TER/TPA) to 1,2-dihydroxy-3,5-cyclohexadiene-1,4-dicarboxylic acid (DCD). TphA1 probably reduces TphA2A3. It can also use 2,5-dicarboxypyridine (PDC) and 1,4-napthalenedicarboxylic acid (NDC) as substrates, and preferentially uses NADPH which is the physiological electron donor. The polypeptide is Terephthalate 1,2-dioxygenase, reductase component 2 (tphA1II) (Comamonas sp).